The primary structure comprises 314 residues: Probable 5-dehydro-4-deoxyglucarate dehydratase (314 aa).

It belongs to the DapA family.

The enzyme catalyses 5-dehydro-4-deoxy-D-glucarate + H(+) = 2,5-dioxopentanoate + CO2 + H2O. It participates in carbohydrate acid metabolism; D-glucarate degradation; 2,5-dioxopentanoate from D-glucarate: step 2/2. The polypeptide is Probable 5-dehydro-4-deoxyglucarate dehydratase (Bradyrhizobium diazoefficiens (strain JCM 10833 / BCRC 13528 / IAM 13628 / NBRC 14792 / USDA 110)).